Reading from the N-terminus, the 349-residue chain is MAKMELSKAFSGQRTLLSAILSMLSLSFSTTSLLSNYWFVGTQKVPKPLCEKGLAAKCFDMPVSLDGDTNTSTQEVVQYNWETGDDRFSFRSFRSGMWLSCEETVEEPALLHPQSWKQFRALRSSGTAAAKGERCRSFIELTPPAKREILWLSLGTQITYIGLQFISFLLLLTDLLLTGNPACGLKLSAFAAVSSVLSGLLGMVAHMMYSQVFQATVNLGPEDWRPHVWNYGWAFYMAWLSFTCCMASAVTTFNTYTRMVLEFKCKHSKSFKENPNCLPHHHQCFPRRLSSAAPTVGPLTSYHQYHNQPIHSVSEGVDFYSELRNKGFQRGASQELKEAVRSSVEEEQC.

4 helical membrane passes run isoleucine 20–valine 40, isoleucine 158–threonine 178, alanine 189–tyrosine 209, and tryptophan 233–phenylalanine 253.

The protein belongs to the GSG1 family. In terms of assembly, interacts with PAPOLB.

It is found in the endoplasmic reticulum membrane. May cause the redistribution of PAPOLB from the cytosol to the endoplasmic reticulum. The protein is Germ cell-specific gene 1 protein (GSG1) of Homo sapiens (Human).